Here is an 88-residue protein sequence, read N- to C-terminus: Large ribosomal subunit protein bL27 (88 aa).

Residues 1–23 (MAHKKAGGSSRNGRDSAGRRLGV) are disordered.

The protein belongs to the bacterial ribosomal protein bL27 family.

This chain is Large ribosomal subunit protein bL27, found in Methylorubrum populi (strain ATCC BAA-705 / NCIMB 13946 / BJ001) (Methylobacterium populi).